A 315-amino-acid chain; its full sequence is NAD-dependent protein lipoamidase sirtuin-4, mitochondrial (315 aa).

A mitochondrion-targeting transit peptide spans 1-29; sequence MRMSFGLTFKRTAKVHWRANFSQQCSLRS. The 278-residue stretch at 38–315 folds into the Deacetylase sirtuin-type domain; sequence PPLDPEKVKE…GELLPLIDPR (278 aa). NAD(+) is bound by residues 63-83 and 144-147; these read GAGI…VGLY and QNVD. The active-site Proton acceptor is the histidine 162. Zn(2+)-binding residues include cysteine 170, cysteine 173, cysteine 221, and cysteine 224. NAD(+)-binding positions include 261-263, 287-289, and cysteine 305; these read GSS and NIG.

Belongs to the sirtuin family. Class II subfamily. As to quaternary structure, interacts with GLUD1, IDE and SLC25A5. Interacts with DLAT and PDHX. Interacts with MCCC1 (via the biotin carboxylation domain). Interacts with PCCA and PC. Zn(2+) serves as cofactor.

It is found in the mitochondrion matrix. It catalyses the reaction N(6)-[(R)-lipoyl]-L-lysyl-[protein] + NAD(+) + H2O = 2''-O-lipoyl-ADP-D-ribose + nicotinamide + L-lysyl-[protein]. It carries out the reaction N(6)-biotinyl-L-lysyl-[protein] + NAD(+) + H2O = 2''-O-biotinyl-ADP-D-ribose + nicotinamide + L-lysyl-[protein]. The catalysed reaction is N(6)-acetyl-L-lysyl-[protein] + NAD(+) + H2O = 2''-O-acetyl-ADP-D-ribose + nicotinamide + L-lysyl-[protein]. The enzyme catalyses L-cysteinyl-[protein] + NAD(+) = S-(ADP-D-ribosyl)-L-cysteinyl-[protein] + nicotinamide + H(+). Acts as a NAD-dependent protein lipoamidase, biotinylase, deacetylase and ADP-ribosyl transferase. Catalyzes more efficiently removal of lipoyl- and biotinyl- than acetyl-lysine modifications. Inhibits the pyruvate dehydrogenase complex (PDH) activity via the enzymatic hydrolysis of the lipoamide cofactor from the E2 component, DLAT, in a phosphorylation-independent manner. Catalyzes the transfer of ADP-ribosyl groups onto target proteins, including mitochondrial GLUD1, inhibiting GLUD1 enzyme activity. Acts as a negative regulator of mitochondrial glutamine metabolism by mediating mono ADP-ribosylation of GLUD1: expressed in response to DNA damage and negatively regulates anaplerosis by inhibiting GLUD1, leading to block metabolism of glutamine into tricarboxylic acid cycle and promoting cell cycle arrest. In response to mTORC1 signal, SIRT4 expression is repressed, promoting anaplerosis and cell proliferation. Acts as a tumor suppressor. Also acts as a NAD-dependent protein deacetylase: mediates deacetylation of 'Lys-471' of MLYCD, inhibiting its activity, thereby acting as a regulator of lipid homeostasis. Does not seem to deacetylate PC. Controls fatty acid oxidation by inhibiting PPARA transcriptional activation. Impairs SIRT1-PPARA interaction probably through the regulation of NAD(+) levels. Down-regulates insulin secretion. The sequence is that of NAD-dependent protein lipoamidase sirtuin-4, mitochondrial from Bos taurus (Bovine).